A 104-amino-acid polypeptide reads, in one-letter code: uncharacterized protein (104 aa).

This is an uncharacterized protein from Homo sapiens (Human).